The following is a 588-amino-acid chain: Adenine deaminase (588 aa).

The protein belongs to the metallo-dependent hydrolases superfamily. Adenine deaminase family. In terms of assembly, homodimer. Mn(2+) is required as a cofactor.

The catalysed reaction is adenine + H2O + H(+) = hypoxanthine + NH4(+). This chain is Adenine deaminase, found in Escherichia coli O17:K52:H18 (strain UMN026 / ExPEC).